A 410-amino-acid polypeptide reads, in one-letter code: Elongation factor Tu (410 aa).

Residues 10 to 219 (KTHVNVGTIG…ALDTYIPDPV (210 aa)) enclose the tr-type G domain. Residues 19–26 (GHVDHGKT), 88–92 (DCPGH), and 143–146 (NKCD) each bind GTP. T26 contacts Mg(2+).

This sequence belongs to the TRAFAC class translation factor GTPase superfamily. Classic translation factor GTPase family. EF-Tu/EF-1A subfamily. Monomer.

It is found in the cytoplasm. The catalysed reaction is GTP + H2O = GDP + phosphate + H(+). GTP hydrolase that promotes the GTP-dependent binding of aminoacyl-tRNA to the A-site of ribosomes during protein biosynthesis. This is Elongation factor Tu from Brachyspira hyodysenteriae (Treponema hyodysenteriae).